The sequence spans 260 residues: MAIVGVPGWIGESAVNETGQRWMDAAMREVRVSVPGWMSSMAGQSKEIHYSIGASNSYNKDTLINWIKAQGSTPVVITITGNIVSQSTGVPCLDFPSSLTNAYVTLIINSGVTVYGRGGNGGSNAAGAAGGNAINNGIGTRLRITNNGAIAGGGGGGGGGNRGKLIFGGGGGRPFGAGGSSSHMSSGATAGTISAPGKGSVGEGSLSAYTGGAGGNVGAAGGRCNTQGNGTEYNGGAAGKAVTGNAPTWTKVGTIYGSRV.

10 short sequence motifs (GRM) span residues 116 to 123 (GRGGNGGS), 125 to 132 (AAGAAGGN), 152 to 160 (GGGGGGGGG), 162 to 173 (RGKLIFGGGGGR), 176 to 182 (GAGGSSS), 185 to 191 (SSGATAG), 194 to 204 (SAPGKGSVGEG), 210 to 216 (TGGAGGN), 219 to 224 (AAGGRC), and 228 to 240 (GNGTEYNGGAAGK). A disordered region spans residues 176–197 (GAGGSSSHMSSGATAGTISAPG). A compositionally biased stretch (low complexity) spans 180–191 (SSSHMSSGATAG).

Belongs to the receptor-recognizing protein gp38 family.

It localises to the virion. Receptor binding protein (RBP) that is at the tip of the long tail fibers and serves as the phage recognition site for the attachment host receptor OmpA. The sequence is that of Receptor-recognizing protein gp38 (38) from Escherichia coli (Bacteriophage K3).